We begin with the raw amino-acid sequence, 217 residues long: Imidazole glycerol phosphate synthase subunit HisH (217 aa).

One can recognise a Glutamine amidotransferase type-1 domain in the interval 6–214 (QIAVVDYDMG…VTQVAAAQLQ (209 aa)). Cysteine 84 (nucleophile) is an active-site residue. Active-site residues include histidine 189 and glutamate 191.

In terms of assembly, heterodimer of HisH and HisF.

The protein resides in the cytoplasm. The catalysed reaction is 5-[(5-phospho-1-deoxy-D-ribulos-1-ylimino)methylamino]-1-(5-phospho-beta-D-ribosyl)imidazole-4-carboxamide + L-glutamine = D-erythro-1-(imidazol-4-yl)glycerol 3-phosphate + 5-amino-1-(5-phospho-beta-D-ribosyl)imidazole-4-carboxamide + L-glutamate + H(+). It carries out the reaction L-glutamine + H2O = L-glutamate + NH4(+). It functions in the pathway amino-acid biosynthesis; L-histidine biosynthesis; L-histidine from 5-phospho-alpha-D-ribose 1-diphosphate: step 5/9. Functionally, IGPS catalyzes the conversion of PRFAR and glutamine to IGP, AICAR and glutamate. The HisH subunit catalyzes the hydrolysis of glutamine to glutamate and ammonia as part of the synthesis of IGP and AICAR. The resulting ammonia molecule is channeled to the active site of HisF. This chain is Imidazole glycerol phosphate synthase subunit HisH, found in Synechococcus sp. (strain ATCC 27144 / PCC 6301 / SAUG 1402/1) (Anacystis nidulans).